The chain runs to 629 residues: Hemocyanin C chain (629 aa).

Cu cation is bound by residues His-175, His-179, His-206, His-326, His-330, and His-366. A glycan (N-linked (GlcNAc...) asparagine) is linked at Asn-451. A disulfide bridge connects residues Cys-537 and Cys-585. A glycan (N-linked (GlcNAc...) asparagine) is linked at Asn-618.

It belongs to the tyrosinase family. Hemocyanin subfamily. In terms of assembly, tarantula hemocyanin is a 24-chain polymer with seven different chains identified. Hemolymph.

The protein resides in the secreted. It is found in the extracellular space. Its function is as follows. Hemocyanins are copper-containing oxygen carriers occurring freely dissolved in the hemolymph of many mollusks and arthropods. The chain is Hemocyanin C chain (HCC) from Aphonopelma sp. (American tarantula).